The primary structure comprises 1124 residues: MGRKKKLPTGVSSGVSHASSAPKSVGGCCVPLGLPQPLLLEEKKFLLAVERGDMPNVRRILQKALRHQHININCMDPLGRRALTLAIDNENLEMVELLVVMGVETKDALLHAINAEFVEAVELLLEHEELIYKEGEPYSWQKVDINTAMFAPDITPLMLAAHKNNFEILRILLDRGAAVPVPHDIRCGCEECVRLTAEDSLRHSLSRVNIYRALCSPSLICLTSNDPIITAFQLSWELRNLALTEQECKSEYMDLRRQCQKFAVDLLDQTRTSNELAIILNYDPQMSSYEPGDRMSLTRLVQAISYKQKKFVAHSNIQQLLSSIWYDGLPGFRRKSIVDKVICIAQVAVLFPLYCLIYMCAPNCRTGQLMRKPFMKFLIHASSYLFFLFILILVSQRADDDFVRIFGTTRMKKELAEQELRQRGQTPSKLELIVVMYVIGFVWEEVQEIFAVGMKSYLRNMWNFIDFLRNSLYVSVMCLRAFAYIQQATEIARDPQMAYIPREKWHDFDPQLIAEGLFAAANVFSALKLVHLFSINPHLGPLQISLGRMVIDIVKFFFIYTLVLFAFACGLNQLLWYFAALEKSKCYVLPGGEADWGSHGDSCMKWRRFGNLFESSQSLFWASFGMVGLDDFELSGIKSYTRFWGLLMFGSYSVINVIVLLNLLIAMMSNSYAMIDEHSDTEWKFARTKLWMSYFEDSATLPPPFNVLPSVKWVIRIFRKSSKTIDRQRSKKRKEQEQFSEYDNIMRSLVWRYVAAMHRKFENNPVSEDDINEVKSEINTMRYEMLEIFENSGMDVSSANKKERQPRPRRIKVWERRLMKGFQVAPVQNGCELDAFGNVNGQGEMQEIKVESIPSKPAKETAKERFQRVARTVLLQSTTHKWNVVLRAAKDSQIGRCTKNERKSLQNLGRAIEEAKRLIMLNPGCPSGRESPIRIEFEDEKTSTLLELLNQISAEISDSEKPKIRPIWRPPLKTVPARAMAANNTRSLTAPELKISRKSSPAPTPTPTPGVSHTALSQFRNRELPLCPSKLIANSAPSAPTAPPKKSAPTAPTPTYKPTTHAPFSVEGGNRENTRASDGVRSDNSNFDIHVVDLDEKGGHLGRDNVSDISSIASTSPQRPKHRN.

The tract at residues 1 to 24 (MGRKKKLPTGVSSGVSHASSAPKS) is disordered. The Cytoplasmic segment spans residues 1–340 (MGRKKKLPTG…GFRRKSIVDK (340 aa)). Positions 10-21 (GVSSGVSHASSA) are enriched in low complexity. ANK repeat units follow at residues 40–69 (LEEKKFLLAVERGDMPNVRRILQKALRHQH), 78–107 (LGRRALTLAIDNENLEMVELLVVMGVETKD), and 152–181 (PDITPLMLAAHKNNFEILRILLDRGAAVPV). Residues 341-361 (VICIAQVAVLFPLYCLIYMCA) form a helical membrane-spanning segment. Topologically, residues 362–373 (PNCRTGQLMRKP) are extracellular. A helical membrane pass occupies residues 374–394 (FMKFLIHASSYLFFLFILILV). The Cytoplasmic segment spans residues 395–431 (SQRADDDFVRIFGTTRMKKELAEQELRQRGQTPSKLE). A helical transmembrane segment spans residues 432–452 (LIVVMYVIGFVWEEVQEIFAV). Residues 453–512 (GMKSYLRNMWNFIDFLRNSLYVSVMCLRAFAYIQQATEIARDPQMAYIPREKWHDFDPQL) lie on the Extracellular side of the membrane. The helical transmembrane segment at 513-533 (IAEGLFAAANVFSALKLVHLF) threads the bilayer. Topologically, residues 534–548 (SINPHLGPLQISLGR) are cytoplasmic. Residues 549-569 (MVIDIVKFFFIYTLVLFAFAC) traverse the membrane as a helical segment. Topologically, residues 570–645 (GLNQLLWYFA…GIKSYTRFWG (76 aa)) are extracellular. The helical transmembrane segment at 646 to 666 (LLMFGSYSVINVIVLLNLLIA) threads the bilayer. The Cytoplasmic segment spans residues 667–1124 (MMSNSYAMID…TSPQRPKHRN (458 aa)). Calmodulin-binding regions lie at residues 710–728 (SVKWVIRIFRKSSKTIDRQ) and 853–895 (IPSK…SQIG). 2 disordered regions span residues 978–1013 (RAMAANNTRSLTAPELKISRKSSPAPTPTPTPGVSH) and 1031–1124 (LIAN…KHRN). The segment covering 1035-1063 (SAPSAPTAPPKKSAPTAPTPTYKPTTHAP) has biased composition (low complexity). Composition is skewed to basic and acidic residues over residues 1069–1081 (GNRENTRASDGVR) and 1090–1106 (HVVDLDEKGGHLGRDNV). The segment covering 1107–1118 (SDISSIASTSPQ) has biased composition (polar residues).

The protein belongs to the transient receptor (TC 1.A.4) family. STrpC subfamily. In terms of assembly, forms heteromultimers with Trpgamma and, to a lower extent, with trp. Interacts with Fkbp59 in vivo and is found in the inaD signaling complex. As to expression, expressed predominantly in the rhabdomeres of photoreceptor cells.

It localises to the membrane. It is found in the cell projection. Its subcellular location is the rhabdomere membrane. Its function is as follows. A light-sensitive calcium channel that is required for inositide-mediated Ca(2+) entry in the retina during phospholipase C (PLC)-mediated phototransduction. Required for vision in the dark and in dim light. Binds calmodulin. Trp and trpl act together in the light response, although it is unclear whether as heteromultimers or distinct units. Also forms a functional cation channel with Trpgamma. Activated by fatty acids, metabolic stress, inositols and GTP-binding proteins. The chain is Transient-receptor-potential-like protein (trpl) from Drosophila melanogaster (Fruit fly).